The following is a 191-amino-acid chain: Leucyl/phenylalanyl-tRNA--protein transferase (191 aa).

It belongs to the L/F-transferase family.

The protein localises to the cytoplasm. It catalyses the reaction N-terminal L-lysyl-[protein] + L-leucyl-tRNA(Leu) = N-terminal L-leucyl-L-lysyl-[protein] + tRNA(Leu) + H(+). It carries out the reaction N-terminal L-arginyl-[protein] + L-leucyl-tRNA(Leu) = N-terminal L-leucyl-L-arginyl-[protein] + tRNA(Leu) + H(+). The enzyme catalyses L-phenylalanyl-tRNA(Phe) + an N-terminal L-alpha-aminoacyl-[protein] = an N-terminal L-phenylalanyl-L-alpha-aminoacyl-[protein] + tRNA(Phe). Functionally, functions in the N-end rule pathway of protein degradation where it conjugates Leu, Phe and, less efficiently, Met from aminoacyl-tRNAs to the N-termini of proteins containing an N-terminal arginine or lysine. The sequence is that of Leucyl/phenylalanyl-tRNA--protein transferase from Nostoc punctiforme (strain ATCC 29133 / PCC 73102).